The chain runs to 160 residues: MKRSDKELHLSKVEGLFSKFKYFIIANFQGMVANDFFSLRKELKMANSGLMVVKNSLSRIALKKMGREELSAKFFGSIFIVYSDDIILISKILAKFMKDNKSKISLLCAYDSNEILDSEKVLYFASLPSLRELHAQIMSMISYNIPVRLALCLKALGNKE.

Belongs to the universal ribosomal protein uL10 family. In terms of assembly, part of the ribosomal stalk of the 50S ribosomal subunit. The N-terminus interacts with L11 and the large rRNA to form the base of the stalk. The C-terminus forms an elongated spine to which L12 dimers bind in a sequential fashion forming a multimeric L10(L12)X complex.

In terms of biological role, forms part of the ribosomal stalk, playing a central role in the interaction of the ribosome with GTP-bound translation factors. This Ehrlichia canis (strain Jake) protein is Large ribosomal subunit protein uL10.